The primary structure comprises 580 residues: Extracellular protease (580 aa).

The first 32 residues, 1-32 (MSTASLRKRTGSLTILGASALTSLLLAMPAFA), serve as a signal peptide directing secretion. Residues 33-136 (GEVYLDGLAT…VEVDQILHAT (104 aa)) constitute a propeptide that is removed on maturation. The region spanning 147 to 465 (QWAFGTTNAG…AGIVNADAAV (319 aa)) is the Peptidase S8 domain. Catalysis depends on charge relay system residues D177 and H237. Intrachain disulfides connect C225–C273 and C315–C352. Residue S409 is the Charge relay system of the active site. C450 and C454 form a disulfide bridge.

Belongs to the peptidase S8 family.

The protein localises to the secreted. This chain is Extracellular protease, found in Xanthomonas campestris pv. campestris (strain ATCC 33913 / DSM 3586 / NCPPB 528 / LMG 568 / P 25).